The sequence spans 465 residues: Fumarate hydratase class II (465 aa).

Residues 99–101 (SGT), 130–133 (HPND), 140–142 (STN), and Thr188 contribute to the substrate site. The active-site Proton donor/acceptor is the His189. Ser319 is a catalytic residue. Substrate contacts are provided by residues Ser320 and 325–327 (KVN).

The protein belongs to the class-II fumarase/aspartase family. Fumarase subfamily. Homotetramer.

The protein resides in the cytoplasm. The enzyme catalyses (S)-malate = fumarate + H2O. It functions in the pathway carbohydrate metabolism; tricarboxylic acid cycle; (S)-malate from fumarate: step 1/1. Functionally, involved in the TCA cycle. Catalyzes the stereospecific interconversion of fumarate to L-malate. This is Fumarate hydratase class II from Prochlorococcus marinus (strain SARG / CCMP1375 / SS120).